A 407-amino-acid polypeptide reads, in one-letter code: Geranylgeranyl diphosphate reductase (407 aa).

The protein belongs to the geranylgeranyl reductase family. ChlP subfamily.

It carries out the reaction phytyl diphosphate + 3 NADP(+) = geranylgeranyl diphosphate + 3 NADPH + 3 H(+). The protein operates within porphyrin-containing compound metabolism; chlorophyll biosynthesis. Catalyzes the stepwise hydrogenation of geranylgeraniol to phytol during chlorophyll A (ChlA) biosynthesis. The sequence is that of Geranylgeranyl diphosphate reductase (chlP) from Synechocystis sp. (strain ATCC 27184 / PCC 6803 / Kazusa).